Reading from the N-terminus, the 379-residue chain is MCDSPATTGKPTILFIADPCETSATLNSKAFKEKFRILRYQLDTKEAFLNFLERHEQDKICAIYAGFPAFKKIGGMTRSIIEHKSFPRKNLKCIVLCSRGYDGWDLDTLRKHEIRLYNYQDDENEKLIDDLKLHQVGNDVADCALWHILEGFRKFSYYQKLSRETGNTLTARAKAAEKSGFAFGHELGNMFAESPRGKKCLILGLGSIGKQVAYKLQYGLGMEIHYCKRSEDCTMSQNESWKFHLLDETIYAKLYQFHAIVVTLPGTPQTEHLINRKFLEHCNPGLILVNLGRGKILDLRAVSDALVTGRINHLGLDVFNKEPEIDEKIRSSDRLTSITPHLGSATKDVFEQSCELALTRILRVVSGEAASDEHFSRVV.

NAD(+)-binding positions include 207-208, 291-293, and aspartate 317; these read SI and LGR. Arginine 293 is a catalytic residue. Glutamate 322 is an active-site residue. Catalysis depends on histidine 341, which acts as the Proton donor. 341-344 contacts NAD(+); that stretch reads HLGS.

The protein belongs to the D-isomer specific 2-hydroxyacid dehydrogenase family.

The chain is Putative 2-hydroxyacid dehydrogenase YGL185C from Saccharomyces cerevisiae (strain ATCC 204508 / S288c) (Baker's yeast).